We begin with the raw amino-acid sequence, 465 residues long: Uronate isomerase (465 aa).

Belongs to the metallo-dependent hydrolases superfamily. Uronate isomerase family.

It carries out the reaction D-glucuronate = D-fructuronate. The catalysed reaction is aldehydo-D-galacturonate = keto-D-tagaturonate. Its pathway is carbohydrate metabolism; pentose and glucuronate interconversion. This chain is Uronate isomerase, found in Bacillus velezensis (strain DSM 23117 / BGSC 10A6 / LMG 26770 / FZB42) (Bacillus amyloliquefaciens subsp. plantarum).